We begin with the raw amino-acid sequence, 96 residues long: Co-chaperonin GroES (96 aa).

It belongs to the GroES chaperonin family. As to quaternary structure, heptamer of 7 subunits arranged in a ring. Interacts with the chaperonin GroEL.

It is found in the cytoplasm. Together with the chaperonin GroEL, plays an essential role in assisting protein folding. The GroEL-GroES system forms a nano-cage that allows encapsulation of the non-native substrate proteins and provides a physical environment optimized to promote and accelerate protein folding. GroES binds to the apical surface of the GroEL ring, thereby capping the opening of the GroEL channel. This Colwellia maris protein is Co-chaperonin GroES.